The primary structure comprises 831 residues: Valine--tRNA ligase (831 aa).

The short motif at 77 to 87 (PFTSGELHMGH) is the 'HIGH' region element. The 'KMSKS' region motif lies at 564-568 (RMSKS). Residue Lys-567 coordinates ATP.

It belongs to the class-I aminoacyl-tRNA synthetase family. ValS type 2 subfamily.

It is found in the cytoplasm. The enzyme catalyses tRNA(Val) + L-valine + ATP = L-valyl-tRNA(Val) + AMP + diphosphate. Catalyzes the attachment of valine to tRNA(Val). As ValRS can inadvertently accommodate and process structurally similar amino acids such as threonine, to avoid such errors, it has a 'posttransfer' editing activity that hydrolyzes mischarged Thr-tRNA(Val) in a tRNA-dependent manner. In Sulfolobus acidocaldarius (strain ATCC 33909 / DSM 639 / JCM 8929 / NBRC 15157 / NCIMB 11770), this protein is Valine--tRNA ligase.